Reading from the N-terminus, the 202-residue chain is Small ribosomal subunit protein uS4c (202 aa).

Positions 90-153 (MRLDNVIFRL…KSEAIISKNI (64 aa)) constitute an S4 RNA-binding domain.

The protein belongs to the universal ribosomal protein uS4 family. As to quaternary structure, part of the 30S ribosomal subunit. Contacts protein S5. The interaction surface between S4 and S5 is involved in control of translational fidelity.

It localises to the plastid. It is found in the chloroplast. Its function is as follows. One of the primary rRNA binding proteins, it binds directly to 16S rRNA where it nucleates assembly of the body of the 30S subunit. Functionally, with S5 and S12 plays an important role in translational accuracy. This Hypopterygium laricinum (Moss) protein is Small ribosomal subunit protein uS4c (rps4).